Here is a 355-residue protein sequence, read N- to C-terminus: Uroporphyrinogen decarboxylase (355 aa).

Residues 27-31 (RQAGR), Phe-46, Asp-78, Tyr-155, Ser-210, and His-328 contribute to the substrate site.

This sequence belongs to the uroporphyrinogen decarboxylase family. Homodimer.

The protein resides in the cytoplasm. The catalysed reaction is uroporphyrinogen III + 4 H(+) = coproporphyrinogen III + 4 CO2. It participates in porphyrin-containing compound metabolism; protoporphyrin-IX biosynthesis; coproporphyrinogen-III from 5-aminolevulinate: step 4/4. Its function is as follows. Catalyzes the decarboxylation of four acetate groups of uroporphyrinogen-III to yield coproporphyrinogen-III. This Pseudomonas aeruginosa (strain ATCC 15692 / DSM 22644 / CIP 104116 / JCM 14847 / LMG 12228 / 1C / PRS 101 / PAO1) protein is Uroporphyrinogen decarboxylase.